The sequence spans 157 residues: Small ribosomal subunit protein uS7 (157 aa).

The protein belongs to the universal ribosomal protein uS7 family. In terms of assembly, part of the 30S ribosomal subunit. Contacts proteins S9 and S11.

One of the primary rRNA binding proteins, it binds directly to 16S rRNA where it nucleates assembly of the head domain of the 30S subunit. Is located at the subunit interface close to the decoding center, probably blocks exit of the E-site tRNA. This Chlamydia abortus (strain DSM 27085 / S26/3) (Chlamydophila abortus) protein is Small ribosomal subunit protein uS7.